Here is a 302-residue protein sequence, read N- to C-terminus: Aspartate carbamoyltransferase catalytic subunit (302 aa).

Residues arginine 53 and threonine 54 each contribute to the carbamoyl phosphate site. Lysine 82 serves as a coordination point for L-aspartate. The carbamoyl phosphate site is built by arginine 103, histidine 131, and glutamine 134. Positions 164 and 223 each coordinate L-aspartate. Residues leucine 260 and proline 261 each contribute to the carbamoyl phosphate site.

The protein belongs to the aspartate/ornithine carbamoyltransferase superfamily. ATCase family. Heterooligomer of catalytic and regulatory chains.

It carries out the reaction carbamoyl phosphate + L-aspartate = N-carbamoyl-L-aspartate + phosphate + H(+). It participates in pyrimidine metabolism; UMP biosynthesis via de novo pathway; (S)-dihydroorotate from bicarbonate: step 2/3. Catalyzes the condensation of carbamoyl phosphate and aspartate to form carbamoyl aspartate and inorganic phosphate, the committed step in the de novo pyrimidine nucleotide biosynthesis pathway. In Methanococcus maripaludis (strain C7 / ATCC BAA-1331), this protein is Aspartate carbamoyltransferase catalytic subunit.